Here is a 466-residue protein sequence, read N- to C-terminus: UDP-N-acetylmuramoylalanine--D-glutamate ligase (466 aa).

ATP is bound at residue 139–145 (GTAGKGG).

The protein belongs to the MurCDEF family.

The protein resides in the cytoplasm. The enzyme catalyses UDP-N-acetyl-alpha-D-muramoyl-L-alanine + D-glutamate + ATP = UDP-N-acetyl-alpha-D-muramoyl-L-alanyl-D-glutamate + ADP + phosphate + H(+). It participates in cell wall biogenesis; peptidoglycan biosynthesis. In terms of biological role, cell wall formation. Catalyzes the addition of glutamate to the nucleotide precursor UDP-N-acetylmuramoyl-L-alanine (UMA). The chain is UDP-N-acetylmuramoylalanine--D-glutamate ligase from Deinococcus geothermalis (strain DSM 11300 / CIP 105573 / AG-3a).